Here is a 156-residue protein sequence, read N- to C-terminus: SsrA-binding protein (156 aa).

Belongs to the SmpB family.

It is found in the cytoplasm. Required for rescue of stalled ribosomes mediated by trans-translation. Binds to transfer-messenger RNA (tmRNA), required for stable association of tmRNA with ribosomes. tmRNA and SmpB together mimic tRNA shape, replacing the anticodon stem-loop with SmpB. tmRNA is encoded by the ssrA gene; the 2 termini fold to resemble tRNA(Ala) and it encodes a 'tag peptide', a short internal open reading frame. During trans-translation Ala-aminoacylated tmRNA acts like a tRNA, entering the A-site of stalled ribosomes, displacing the stalled mRNA. The ribosome then switches to translate the ORF on the tmRNA; the nascent peptide is terminated with the 'tag peptide' encoded by the tmRNA and targeted for degradation. The ribosome is freed to recommence translation, which seems to be the essential function of trans-translation. This is SsrA-binding protein from Staphylococcus epidermidis (strain ATCC 35984 / DSM 28319 / BCRC 17069 / CCUG 31568 / BM 3577 / RP62A).